The following is a 652-amino-acid chain: DNA ligase (652 aa).

NAD(+) is bound by residues 29–33 (DSEYD), 78–79 (SL), and glutamate 107. Catalysis depends on lysine 109, which acts as the N6-AMP-lysine intermediate. Residues arginine 130, glutamate 164, lysine 278, and lysine 302 each contribute to the NAD(+) site. The Zn(2+) site is built by cysteine 395, cysteine 398, cysteine 413, and cysteine 418. The BRCT domain occupies 577 to 652 (AADAVLSGKT…IQDEAWLEQL (76 aa)).

It belongs to the NAD-dependent DNA ligase family. LigA subfamily. Mg(2+) is required as a cofactor. It depends on Mn(2+) as a cofactor.

The enzyme catalyses NAD(+) + (deoxyribonucleotide)n-3'-hydroxyl + 5'-phospho-(deoxyribonucleotide)m = (deoxyribonucleotide)n+m + AMP + beta-nicotinamide D-nucleotide.. Its function is as follows. DNA ligase that catalyzes the formation of phosphodiester linkages between 5'-phosphoryl and 3'-hydroxyl groups in double-stranded DNA using NAD as a coenzyme and as the energy source for the reaction. It is essential for DNA replication and repair of damaged DNA. In Streptococcus gordonii (strain Challis / ATCC 35105 / BCRC 15272 / CH1 / DL1 / V288), this protein is DNA ligase.